The following is a 303-amino-acid chain: 1-phosphofructokinase (303 aa).

ATP is bound at residue 248–249 (GD). D249 (proton acceptor) is an active-site residue.

The protein belongs to the carbohydrate kinase PfkB family.

The enzyme catalyses beta-D-fructose 1-phosphate + ATP = beta-D-fructose 1,6-bisphosphate + ADP + H(+). Functionally, catalyzes the ATP-dependent phosphorylation of fructose-l-phosphate to fructose-l,6-bisphosphate. In Bacillus subtilis (strain 168), this protein is 1-phosphofructokinase (fruK).